We begin with the raw amino-acid sequence, 421 residues long: Acetylglutamate kinase (421 aa).

An acetylglutamate kinase region spans residues 1-252 (MASTKEISQY…PLESSVSITR (252 aa)). Residues 59-60 (AG), arginine 81, and asparagine 170 each bind substrate. An N-acetyltransferase domain is found at 274–420 (ERVIRATTWK…HCAQHPPTLI (147 aa)).

It in the N-terminal section; belongs to the acetylglutamate kinase family. ArgB subfamily.

The protein localises to the cytoplasm. It carries out the reaction N-acetyl-L-glutamate + ATP = N-acetyl-L-glutamyl 5-phosphate + ADP. The protein operates within amino-acid biosynthesis; L-arginine biosynthesis; N(2)-acetyl-L-ornithine from L-glutamate: step 2/4. The chain is Acetylglutamate kinase (argB) from Xylella fastidiosa (strain 9a5c).